A 404-amino-acid polypeptide reads, in one-letter code: Floricaula/leafy-like protein FL1 (404 aa).

Residues 210 to 251 (IGVPEHSSESDERKADTNKQKRRRSKEPGEDGEDRPREHPFI) are disordered. Composition is skewed to basic and acidic residues over residues 215–228 (HSSESDERKADTNK) and 235–249 (KEPGEDGEDRPREHP). 3 consecutive DNA-binding regions follow at residues 246-250 (REHPF), 315-322 (NKPKMRHY), and 386-389 (YVPT).

This sequence belongs to the FLO/LFY family. As to expression, expressed in both male and female cones, vegetative buds and needles, but not in the roots.

The protein localises to the nucleus. Functionally, probable transcription factor. This chain is Floricaula/leafy-like protein FL1, found in Pinus radiata (Monterey pine).